A 493-amino-acid chain; its full sequence is Cytochrome P450 2E1 (493 aa).

298–303 (FAGTET) lines the substrate pocket. A heme-binding site is contributed by Cys437.

This sequence belongs to the cytochrome P450 family. Interacts with chaperones HSP70 and HSP90; this interaction is required for initial targeting to mitochondria. Heme serves as cofactor.

The protein localises to the endoplasmic reticulum membrane. The protein resides in the microsome membrane. It is found in the mitochondrion inner membrane. It catalyses the reaction an organic molecule + reduced [NADPH--hemoprotein reductase] + O2 = an alcohol + oxidized [NADPH--hemoprotein reductase] + H2O + H(+). The enzyme catalyses (5Z,8Z,11Z)-eicosatrienoate + reduced [NADPH--hemoprotein reductase] + O2 = 19-hydroxy-(5Z,8Z,11Z)-eicosatrienoate + oxidized [NADPH--hemoprotein reductase] + H2O + H(+). It carries out the reaction (5Z,8Z,11Z,14Z,17Z)-eicosapentaenoate + reduced [NADPH--hemoprotein reductase] + O2 = 19-hydroxy-(5Z,8Z,11Z,14Z,17Z)-eicosapentaenoate + oxidized [NADPH--hemoprotein reductase] + H2O + H(+). The catalysed reaction is (4Z,7Z,10Z,13Z,16Z,19Z)-docosahexaenoate + reduced [NADPH--hemoprotein reductase] + O2 = 21-hydroxy-(4Z,7Z,10Z,13Z,16Z,19Z)-docosahexaenoate + oxidized [NADPH--hemoprotein reductase] + H2O + H(+). It catalyses the reaction dodecanoate + reduced [NADPH--hemoprotein reductase] + O2 = 11-hydroxydodecanoate + oxidized [NADPH--hemoprotein reductase] + H2O + H(+). The enzyme catalyses tetradecanoate + reduced [NADPH--hemoprotein reductase] + O2 = 13-hydroxytetradecanoate + oxidized [NADPH--hemoprotein reductase] + H2O + H(+). It carries out the reaction 4-nitrophenol + NADPH + O2 + H(+) = 4-nitrocatechol + NADP(+) + H2O. The protein operates within lipid metabolism; fatty acid metabolism. Its activity is regulated as follows. The omega-1 hydroxylase activity is stimulated by cytochrome b5. A cytochrome P450 monooxygenase involved in the metabolism of fatty acids. Mechanistically, uses molecular oxygen inserting one oxygen atom into a substrate, and reducing the second into a water molecule, with two electrons provided by NADPH via cytochrome P450 reductase (NADPH--hemoprotein reductase). Catalyzes the hydroxylation of carbon-hydrogen bonds. Hydroxylates fatty acids specifically at the omega-1 position displaying the highest catalytic activity for saturated fatty acids. May be involved in the oxidative metabolism of xenobiotics. This is Cytochrome P450 2E1 (CYP2E1) from Macaca mulatta (Rhesus macaque).